We begin with the raw amino-acid sequence, 181 residues long: Peptidyl-tRNA hydrolase 2, mitochondrial (181 aa).

The helical transmembrane segment at 10–32 (YLVHPGTLSLAAGVACGMCLGWG) threads the bilayer. Glycyl lysine isopeptide (Lys-Gly) (interchain with G-Cter in ubiquitin) cross-links involve residues K78, K83, K97, K108, K117, and K179.

Belongs to the PTH2 family. As to quaternary structure, monomer. Ubiquitinated by PRKN during mitophagy, leading to its degradation and enhancement of mitophagy. Deubiquitinated by USP30.

The protein resides in the mitochondrion outer membrane. The catalysed reaction is an N-acyl-L-alpha-aminoacyl-tRNA + H2O = an N-acyl-L-amino acid + a tRNA + H(+). Its function is as follows. Peptidyl-tRNA hydrolase which releases tRNAs from the ribosome during protein synthesis. Promotes caspase-independent apoptosis by regulating the function of two transcriptional regulators, AES and TLE1. The polypeptide is Peptidyl-tRNA hydrolase 2, mitochondrial (Ptrh2) (Mus musculus (Mouse)).